The sequence spans 150 residues: Large ribosomal subunit protein bL9 (150 aa).

Belongs to the bacterial ribosomal protein bL9 family.

Its function is as follows. Binds to the 23S rRNA. The chain is Large ribosomal subunit protein bL9 from Janthinobacterium sp. (strain Marseille) (Minibacterium massiliensis).